Consider the following 478-residue polypeptide: Solute carrier family 2, facilitated glucose transporter member 8 (478 aa).

The interval 1 to 20 (MTPEDQEETQPLLRPPGGSA) is disordered. Residues 1 to 25 (MTPEDQEETQPLLRPPGGSAPRGRR) are Cytoplasmic-facing. The segment covering 11–20 (PLLRPPGGSA) has biased composition (low complexity). The Dileucine internalization motif signature appears at 12–13 (LL). The helical transmembrane segment at 26–46 (VFLAAFAAALGPLSFGFALGY) threads the bilayer. The Extracellular portion of the chain corresponds to 47–70 (SSPAIPSLRRAAPPAPHLDEDAAS). A helical membrane pass occupies residues 71 to 91 (WFGAIVTLGAAAGGVLGGWLL). At 92-97 (DRAGRK) the chain is on the cytoplasmic side. A helical transmembrane segment spans residues 98-118 (LSLVLCALPFVAGFAVITAAQ). At 119–127 (NLWMLLGGR) the chain is on the extracellular side. A helical transmembrane segment spans residues 128 to 148 (LLTGLACGIASLVAPVYISEI). Residues 149-158 (AYPEVRGLLG) are Cytoplasmic-facing. The helical transmembrane segment at 159–179 (SCVQLMVVTGILLAYLAGWVL) threads the bilayer. Residue Q162 participates in D-glucose binding. Residues 180–182 (EWR) are Extracellular-facing. Residues 183–203 (WLAVLGCVPPSFMLLLMCFMP) form a helical membrane-spanning segment. Over 204–257 (ETPRFLLSQHKHQEAMAAMQFLWGYAQGWEEPPLGAQHQDFHVAQLRRPGVYKP) the chain is Cytoplasmic. Residues 258-278 (FIIGISLMAFQQLSGVNAVMF) form a helical membrane-spanning segment. Residues 268 to 269 (QQ) and N274 contribute to the D-glucose site. At 279 to 293 (YAETIFEEAKFKDSS) the chain is on the extracellular side. Residues 294–314 (LASVVVGVIQVLFTATAALIM) form a helical membrane-spanning segment. The Cytoplasmic segment spans residues 315–320 (DRAGRR). The helical transmembrane segment at 321–341 (LLLTLSGVVMVFSTSAFGTYF) threads the bilayer. Over 342 to 368 (KLTEGGPSNSSHVDLPALVSMEAADTN) the chain is Extracellular. N350 carries N-linked (GlcNAc...) asparagine glycosylation. The helical transmembrane segment at 369–389 (VGLAWLAVGSMCLFIAGFAVG) threads the bilayer. The Cytoplasmic portion of the chain corresponds to 390 to 405 (WGPIPWLLMSEIFPLH). W395 contacts D-glucose. A helical membrane pass occupies residues 406 to 426 (VKGVATGVCVLTNWFMAFLVT). The Extracellular portion of the chain corresponds to 427–439 (KEFSSLMEVLRPY). A helical transmembrane segment spans residues 440–460 (GAFWLASAFCIFGVLFTLACV). At 461-478 (PETKGKTLEQITAHFEGR) the chain is on the cytoplasmic side.

Belongs to the major facilitator superfamily. Sugar transporter (TC 2.A.1.1) family. Glucose transporter subfamily. As to quaternary structure, interacts with AP2B1. Abundantly expressed in testis and more moderately in lung, kidney, spleen, intestine, skeletal muscle, liver and mammary gland.

Its subcellular location is the cell membrane. It localises to the cytoplasmic vesicle membrane. It carries out the reaction D-glucose(out) = D-glucose(in). The enzyme catalyses D-fructose(out) = D-fructose(in). It catalyses the reaction L-dehydroascorbate(out) = L-dehydroascorbate(in). The catalysed reaction is alpha,alpha-trehalose(in) = alpha,alpha-trehalose(out). Its activity is regulated as follows. Inhibited by cytochalasin B. Its function is as follows. Insulin-regulated facilitative hexose transporter that mediates the transport of glucose and fructose. Facilitates hepatic influx of dietary trehalose, which in turn inhibits glucose and fructose influx triggering a starvation signal and hepatic autophagy through activation of AMPK and ULK1. Also able to mediate the transport of dehydroascorbate. The sequence is that of Solute carrier family 2, facilitated glucose transporter member 8 from Bos taurus (Bovine).